The chain runs to 169 residues: Cilia- and flagella-associated protein HOATZ (169 aa).

3 disordered regions span residues 1-21, 52-89, and 144-169; these read METG…MCPP, SQLV…LASN, and KAKE…KTLD. Polar residues predominate over residues 75-89; that stretch reads SENSHSSQSFHLASN.

This sequence belongs to the HOATZ family.

Its subcellular location is the cytoplasm. It is found in the cell projection. The protein localises to the cilium. Its function is as follows. Required for motile ciliogenesis and flagellar genesis by mediating the maturation of the glycolytic enzyme ENO4. This Homo sapiens (Human) protein is Cilia- and flagella-associated protein HOATZ.